We begin with the raw amino-acid sequence, 1242 residues long: Receptor-type adenylate cyclase GRESAG 4.1 (1242 aa).

Residues 1–39 (MHWQEGGGRGCVYTHGNCRRNLTARALQALQHVEALTCH) are Cytoplasmic-facing. A helical transmembrane segment spans residues 40-60 (YCVSLLHLLPLLLMWMPPVCA). Residues 61–862 (DDSAVTVNVL…THTVTDSWNN (802 aa)) lie on the Extracellular side of the membrane. N-linked (GlcNAc...) asparagine glycosylation is found at Asn116, Asn289, Asn318, Asn338, Asn401, Asn534, Asn563, Asn603, Asn702, Asn741, and Asn818. Residues 863–883 (FWVCIRLVIIYCPWCVPTHLP) traverse the membrane as a helical segment. At 884–1242 (AERRNNNRAP…PFYDMHLQEY (359 aa)) the chain is on the cytoplasmic side. The region spanning 901 to 1056 (TLIFTDIESS…RTPNMAARTE (156 aa)) is the Guanylate cyclase domain. The Mg(2+) site is built by Asp906 and Asp949.

Belongs to the adenylyl cyclase class-3 family. Mg(2+) is required as a cofactor.

The protein localises to the membrane. It carries out the reaction ATP = 3',5'-cyclic AMP + diphosphate. Could act as a receptor for an unknown ligand. The polypeptide is Receptor-type adenylate cyclase GRESAG 4.1 (GRESAG 4.1) (Trypanosoma brucei brucei).